Consider the following 305-residue polypeptide: MSFTSDVKKELTSNLATTGALLALVRMNGSVGIFNGLTLSITTENAGTAKYIYQMLRELYDVHAEIRVHQKTTLSKNRVYTVFITEGASELLDELSLADSLMLDNGVPEFVKNDEFIKKDYLRGAFLSAGSLHNPEKGEYQLSIASVYQEHAEDLQEIFRDFGLNARVIERKNRWILYLSKAEEIMDFLTLIGAMKARLKFEEAKIMREMRGLANRQSNFENANIAKSVMAAQEAINAIKFLNERKELEQLPENLKEIARVRLENPEATIKELGELLEPSLGKSGVNHRLRKLVEQANELRKIEN.

The segment at residues 269 to 302 (TIKELGELLEPSLGKSGVNHRLRKLVEQANELRK) is a DNA-binding region (H-T-H motif).

This sequence belongs to the WhiA family.

In terms of biological role, involved in cell division and chromosome segregation. This Lactococcus lactis subsp. lactis (strain IL1403) (Streptococcus lactis) protein is Probable cell division protein WhiA.